A 59-amino-acid polypeptide reads, in one-letter code: Cecropin-A (59 aa).

The signal sequence occupies residues 1-23 (MNFNKLFVIVLLAALAFFGQAEA). Residue Leu-57 is modified to Leucine amide.

Belongs to the cecropin family.

The protein localises to the secreted. In terms of biological role, cecropins have lytic and antibacterial activity against several Gram-positive and Gram-negative bacteria. In Culex pipiens pipiens (Northern house mosquito), this protein is Cecropin-A (CECA).